Reading from the N-terminus, the 185-residue chain is Ribosome-recycling factor (185 aa).

The protein belongs to the RRF family.

It localises to the cytoplasm. Responsible for the release of ribosomes from messenger RNA at the termination of protein biosynthesis. May increase the efficiency of translation by recycling ribosomes from one round of translation to another. The chain is Ribosome-recycling factor from Heliobacterium modesticaldum (strain ATCC 51547 / Ice1).